Reading from the N-terminus, the 928-residue chain is MALLITVVTCFMIILDTSQSCHTPDDFVAITSPGHIMIGGLFAIHEKMLSSDDHPRRPQIQKCAGFEISVFLQTLAMIHSIEMINNSTLLSGVKLGYEIYDTCTEVTAAMAATLRFLSKFNCSRETVVFQCDYSSYMPRVKAVIGAGYSETSIAVSRMLNLQLMPQVSYESTAEILSDKIRFPSFLRTVPSDFYQTKAMAHLIRQSGWNWIGAITTDDDYGRLALNTFAIQAAENNVCIAFKEVLPAFLSDNTIEVRINQTLEKIIAEAQVNVIVVFLRKFHVFNLFTKAIERKISKIWIASDNWSTATKIITIPNVKKLGKVVGFAFRRGNTSSFHSFLQTLHMYPNDNNKPLHEFAMLVSACKYIKDGDLSQCISNYSQATLTYDTTKTIENHLFKRNDFLWHYTEPGLIYSIQLAVFALGHAIRDLCQARDCKKPNAFQPWELLAVLKNVTFTDGRNSFHFDAHGDLNTGYDVVLWKETNGLMTVTKMAEYDLQRDVFITTNQETKHEFRKLKQILSKCSKECSPGQMKKATGSQHSCCYECVSCPENHYSNETDMDHCLLCNNETHWAPVRSTTCFEKEVEYLDWDDSLALLLIALSLLGIAFVLAIGIIFTRNLKTPVVKSSGGLVVCYVMLICHALNFASTGFFIGEPQDFACKTRQTLFGVSFTLCVSCILTKSLKILLAFSFDPKLTMFLKCLYRPVPIVLTCTGIQVVICTLWLVLAAPSVEENISLPRVIILECEEGSALAFGTMLGYITVLAFICFVFAFKGRKLPENYNEAKFLTFGMLIYFIAWITFIPVYTTTFGKYLPAVEIIVILISNYGILCCIFFPKCYIILCKQKTNTKSAFLQMVYNYSAHSVDSLALSHVSLDSTSYDTATTNQSPGNKMTACQNDNHLPAQVLPHTGTAKTIKASKTLRQKRSSSI.

Positions Met1 to Ser20 are cleaved as a signal peptide. Residues Cys21–Ala594 are Extracellular-facing. N-linked (GlcNAc...) asparagine glycans are attached at residues Asn332, Asn555, and Asn567. Residues Leu595–Phe615 traverse the membrane as a helical segment. The Cytoplasmic segment spans residues Thr616 to Leu630. A helical transmembrane segment spans residues Val631–Ile651. The Extracellular segment spans residues Gly652–Ser669. Residues Phe670–Phe690 traverse the membrane as a helical segment. Residues Asp691–Pro706 lie on the Cytoplasmic side of the membrane. A helical transmembrane segment spans residues Ile707–Ala727. Residues Pro728–Leu750 lie on the Extracellular side of the membrane. Residues Ala751–Phe771 form a helical membrane-spanning segment. Residues Lys772 to Lys784 are Cytoplasmic-facing. The chain crosses the membrane as a helical span at residues Phe785 to Thr805. At Thr806–Leu812 the chain is on the extracellular side. A helical transmembrane segment spans residues Pro813–Phe833. Over Pro834–Ile928 the chain is Cytoplasmic.

The protein belongs to the G-protein coupled receptor 3 family. As to quaternary structure, homodimer; disulfide-linked. In terms of processing, N-glycosylated. In terms of tissue distribution, expressed at high level in liver, lung, spleen and heart. Expressed at lower level in kidney, skeletal muscle and brain. Expressed in 7 dpc, 11 dpc, 15 dpc and 17 dpc embryos.

Its subcellular location is the cell membrane. Functionally, receptor activated by multiple ligands, including osteocalcin (BGLAP), basic amino acids, and various cations. Activated by amino acids with a preference for basic amino acids such as L-Lys, L-Arg and L-ornithine but also by small and polar amino acids. The L-alpha amino acids respond is augmented by divalent cations Ca(2+) and Mg(2+). Seems to act through a G(q)/G(11) and G(i)-coupled pathway. Regulates testosterone production by acting as a ligand for uncarboxylated osteocalcin hormone: osteocalcin-binding at the surface of Leydig cells initiates a signaling response that promotes the expression of enzymes required for testosterone synthesis in a CREB-dependent manner. Mediates the non-genomic effects of androgens in multiple tissue. May coordinate nutritional and hormonal anabolic signals through the sensing of extracellular amino acids, osteocalcin, divalent ions and its responsiveness to anabolic steroids. In Mus musculus (Mouse), this protein is G-protein coupled receptor family C group 6 member A (Gprc6a).